Here is an 804-residue protein sequence, read N- to C-terminus: Cyclic di-GMP-binding protein (804 aa).

A signal peptide spans 1–18 (MKMVSLIALLVFATGAQA). Residues 19-766 (APIASKAPAH…DWYMHNHPFR (748 aa)) lie on the Periplasmic side of the membrane. The segment at 24 to 69 (KAPAHQPTGSDLPPLPAAAPVAPAAQPSAQAVDPASAAPASDAGSA) is disordered. A helical membrane pass occupies residues 767-787 (VIVVGLVGCLLVVAVLVRALF). The Cytoplasmic segment spans residues 788 to 804 (RHAMFRRRQLQEERQKS).

This sequence belongs to the AcsB/BcsB family. As to quaternary structure, tightly associated with the cellulose synthase catalytic subunit.

Its subcellular location is the cell inner membrane. Its pathway is glycan metabolism; bacterial cellulose biosynthesis. Functionally, binds the cellulose synthase activator, bis-(3'-5') cyclic diguanylic acid (c-di-GMP). In Komagataeibacter xylinus (Gluconacetobacter xylinus), this protein is Cyclic di-GMP-binding protein (bcsBI).